We begin with the raw amino-acid sequence, 298 residues long: Probable aspartoacylase (298 aa).

Positions 13 and 16 each coordinate Zn(2+). Substrate is bound by residues arginine 54 and 61 to 62 (NR). Histidine 103 serves as a coordination point for Zn(2+). Substrate is bound by residues glutamate 161 and tyrosine 271.

This sequence belongs to the AspA/AstE family. Aspartoacylase subfamily. Requires Zn(2+) as cofactor.

It catalyses the reaction an N-acyl-L-aspartate + H2O = a carboxylate + L-aspartate. The chain is Probable aspartoacylase from Prochlorococcus marinus (strain MIT 9515).